The following is a 246-amino-acid chain: MKAVIVIPARLKSTRLPEKMLVDLDGKPLVVRTYEQAKKSRLASDVLLAVDSKRLLDIAESFGCKAVLTPENLQSGTDRIAFAAKSIDADVVINVQGDEPLIPPEMIDSAILPFIENAALPCATLIQPIVSDVPEILQNPNVVKVVTDKNGYALYFSRSPIPYQRNSDAQPKIFRHIGLYAFRKPALETFTTLPPSMLEETERLEQLRLLENGIRIKCVITNLDSQAVDTADDLAKVKAILAKKLK.

Belongs to the KdsB family.

The protein localises to the cytoplasm. It carries out the reaction 3-deoxy-alpha-D-manno-oct-2-ulosonate + CTP = CMP-3-deoxy-beta-D-manno-octulosonate + diphosphate. It participates in nucleotide-sugar biosynthesis; CMP-3-deoxy-D-manno-octulosonate biosynthesis; CMP-3-deoxy-D-manno-octulosonate from 3-deoxy-D-manno-octulosonate and CTP: step 1/1. Its pathway is bacterial outer membrane biogenesis; lipopolysaccharide biosynthesis. Its function is as follows. Activates KDO (a required 8-carbon sugar) for incorporation into bacterial lipopolysaccharide in Gram-negative bacteria. The protein is 3-deoxy-manno-octulosonate cytidylyltransferase of Chloroherpeton thalassium (strain ATCC 35110 / GB-78).